The chain runs to 1041 residues: Putative transcription elongation factor SPT5 homolog 1 (1041 aa).

The interval 1 to 133 (MPRSRDEDDE…ERGDRRYERR (133 aa)) is disordered. 3 stretches are compositionally biased toward acidic residues: residues 7–32 (EDDE…EEEE), 53–69 (DYAE…DEDY), and 99–114 (DDED…DDFI). Ser59 is subject to Phosphoserine. Residues 122–133 (PDERGDRRYERR) show a composition bias toward basic and acidic residues. KOW domains follow at residues 273 to 300 (DLSR…VDNV), 425 to 452 (HFMK…VDEE), 477 to 504 (YFEP…VDQH), and 601 to 628 (VIAV…IYKG). 2 disordered regions span residues 662–713 (NRNG…GDDS) and 768–921 (DTSR…GTGL). Gly residues predominate over residues 691-703 (GRGGGYNNSGGRH). The KOW 5 domain maps to 712-739 (DSLLGTTVKIRLGPFKGYRGPVVEVKGN). Over residues 804 to 814 (DGMRTPMRDRA) the composition is skewed to basic and acidic residues. 2 stretches are compositionally biased toward polar residues: residues 835–844 (SWGTSPQYQP) and 893–904 (TPGQPMTPSSAS). The 28-residue stretch at 988–1015 (PPRKSDRVKIVGGQYRGSTGKLIGIDGS) folds into the KOW 6 domain.

It belongs to the SPT5 family.

It localises to the nucleus. Its function is as follows. May regulate transcription elongation by RNA polymerase II. May enhance transcriptional pausing at sites proximal to the promoter, which may in turn facilitate the assembly of an elongation competent RNA polymerase II complex. The chain is Putative transcription elongation factor SPT5 homolog 1 from Arabidopsis thaliana (Mouse-ear cress).